Reading from the N-terminus, the 211-residue chain is Uracil phosphoribosyltransferase (211 aa).

30-34 (KGLVR) contacts GTP. Residues Arg79, Arg104, and 133–141 (DPMLATGTT) contribute to the 5-phospho-alpha-D-ribose 1-diphosphate site. Uracil-binding positions include Ile197 and 202 to 204 (GDA). Position 203 (Asp203) interacts with 5-phospho-alpha-D-ribose 1-diphosphate.

The protein belongs to the UPRTase family. Requires Mg(2+) as cofactor.

The enzyme catalyses UMP + diphosphate = 5-phospho-alpha-D-ribose 1-diphosphate + uracil. It participates in pyrimidine metabolism; UMP biosynthesis via salvage pathway; UMP from uracil: step 1/1. With respect to regulation, allosterically activated by GTP. Catalyzes the conversion of uracil and 5-phospho-alpha-D-ribose 1-diphosphate (PRPP) to UMP and diphosphate. The protein is Uracil phosphoribosyltransferase of Pyrobaculum arsenaticum (strain DSM 13514 / JCM 11321 / PZ6).